The sequence spans 248 residues: tRNA pseudouridine synthase A (248 aa).

The Nucleophile role is filled by Asp-52. Tyr-113 provides a ligand contact to substrate.

This sequence belongs to the tRNA pseudouridine synthase TruA family. As to quaternary structure, homodimer.

It catalyses the reaction uridine(38/39/40) in tRNA = pseudouridine(38/39/40) in tRNA. Functionally, formation of pseudouridine at positions 38, 39 and 40 in the anticodon stem and loop of transfer RNAs. The protein is tRNA pseudouridine synthase A of Mesorhizobium japonicum (strain LMG 29417 / CECT 9101 / MAFF 303099) (Mesorhizobium loti (strain MAFF 303099)).